We begin with the raw amino-acid sequence, 126 residues long: Small ribosomal subunit protein uS12 (126 aa).

The residue at position 89 (Asp-89) is a 3-methylthioaspartic acid.

It belongs to the universal ribosomal protein uS12 family. Part of the 30S ribosomal subunit. Contacts proteins S8 and S17. May interact with IF1 in the 30S initiation complex.

Its function is as follows. With S4 and S5 plays an important role in translational accuracy. Functionally, interacts with and stabilizes bases of the 16S rRNA that are involved in tRNA selection in the A site and with the mRNA backbone. Located at the interface of the 30S and 50S subunits, it traverses the body of the 30S subunit contacting proteins on the other side and probably holding the rRNA structure together. The combined cluster of proteins S8, S12 and S17 appears to hold together the shoulder and platform of the 30S subunit. The protein is Small ribosomal subunit protein uS12 of Polynucleobacter asymbioticus (strain DSM 18221 / CIP 109841 / QLW-P1DMWA-1) (Polynucleobacter necessarius subsp. asymbioticus).